A 358-amino-acid chain; its full sequence is Replication-associated protein (358 aa).

A CRESS-DNA virus Rep endonuclease domain is found at 7-115 (RVQAKNVFLT…DGDTVEWGQF (109 aa)). The RCR-1 motif lies at 14–17 (FLTY). A divalent metal cation contacts are provided by E48, H56, and H58. The RCR-2 signature appears at 56 to 58 (HLH). Residue Y102 is the For DNA cleavage activity of the active site. Positions 102–105 (YLDK) match the RCR-3 motif. Residue D106 coordinates a divalent metal cation. The interval 142–152 (KSEALNVIREL) is binding to RBR1. Residues 155–175 (KDFVLQFHNLNSNLDRIFQEP) form an oligomerization region. 220–227 (GDSRTGKT) lines the ATP pocket.

Belongs to the geminiviridae Rep protein family. Homooligomer. Interacts with the replication enhancer protein (REn). Interacts with host retinoblastoma-related protein 1 (RBR1), and may thereby induce the transcription of host replicative enzymes even if the cell is not dividing anymore. Interacts with host PCNA. Interacts with host SCE1 protein. It depends on Mg(2+) as a cofactor. The cofactor is Mn(2+).

Its subcellular location is the host nucleus. In terms of biological role, essential for the replication of viral ssDNA. The closed circular ssDNA genome is first converted to a superhelical dsDNA. Rep binds a specific region at the genome origin of replication. It introduces an endonucleolytic nick within the conserved sequence 5'-TAATATTAC-3' in the intergenic region of the genome present in all geminiviruses, thereby initiating the rolling circle replication (RCR). Following cleavage, binds covalently to the 5'-phosphate of DNA as a tyrosyl ester. The cleavage gives rise to a free 3'-OH that serves as a primer for the cellular DNA polymerase. The polymerase synthesizes the (+) strand DNA by rolling circle mechanism. After one round of replication, a Rep-catalyzed nucleotidyl transfer reaction releases a circular single-stranded virus genome, thereby terminating the replication. Displays origin-specific DNA cleavage, nucleotidyl transferase, ATPase and helicase activities. The polypeptide is Replication-associated protein (Hewittia sublobata (Coralbush)).